The chain runs to 61 residues: Small ribosomal subunit protein uS14 (61 aa).

Zn(2+)-binding residues include Cys24, Cys27, Cys40, and Cys43.

Belongs to the universal ribosomal protein uS14 family. Zinc-binding uS14 subfamily. In terms of assembly, part of the 30S ribosomal subunit. Contacts proteins S3 and S10. It depends on Zn(2+) as a cofactor.

In terms of biological role, binds 16S rRNA, required for the assembly of 30S particles and may also be responsible for determining the conformation of the 16S rRNA at the A site. This chain is Small ribosomal subunit protein uS14, found in Halothermothrix orenii (strain H 168 / OCM 544 / DSM 9562).